We begin with the raw amino-acid sequence, 129 residues long: Follitropin subunit beta (129 aa).

The first 20 residues, 1 to 20 (MKTVQFCFLFCCWKAICCNS), serve as a signal peptide directing secretion. Cystine bridges form between Cys-21-Cys-69, Cys-35-Cys-84, Cys-38-Cys-122, Cys-46-Cys-100, Cys-50-Cys-102, and Cys-105-Cys-112. Asn-25 and Asn-42 each carry an N-linked (GlcNAc...) asparagine glycan.

This sequence belongs to the glycoprotein hormones subunit beta family. Heterodimer. The active follitropin is a heterodimer composed of an alpha chain/CGA shared with other hormones and a unique beta chain/FSHB shown here.

It localises to the secreted. Functionally, together with the alpha chain CGA constitutes follitropin, the follicle-stimulating hormone, and provides its biological specificity to the hormone heterodimer. Binds FSHR, a G protein-coupled receptor, on target cells to activate downstream signaling pathways. Follitropin is involved in follicle development and spermatogenesis in reproductive organs. The sequence is that of Follitropin subunit beta (FSHB) from Saimiri boliviensis boliviensis (Bolivian squirrel monkey).